A 184-amino-acid polypeptide reads, in one-letter code: ATP synthase subunit b, chloroplastic (184 aa).

A helical membrane pass occupies residues 27–49 (LATNPINLSVVLGVLIFFGKGVL).

The protein belongs to the ATPase B chain family. In terms of assembly, F-type ATPases have 2 components, F(1) - the catalytic core - and F(0) - the membrane proton channel. F(1) has five subunits: alpha(3), beta(3), gamma(1), delta(1), epsilon(1). F(0) has four main subunits: a(1), b(1), b'(1) and c(10-14). The alpha and beta chains form an alternating ring which encloses part of the gamma chain. F(1) is attached to F(0) by a central stalk formed by the gamma and epsilon chains, while a peripheral stalk is formed by the delta, b and b' chains.

It localises to the plastid. It is found in the chloroplast thylakoid membrane. F(1)F(0) ATP synthase produces ATP from ADP in the presence of a proton or sodium gradient. F-type ATPases consist of two structural domains, F(1) containing the extramembraneous catalytic core and F(0) containing the membrane proton channel, linked together by a central stalk and a peripheral stalk. During catalysis, ATP synthesis in the catalytic domain of F(1) is coupled via a rotary mechanism of the central stalk subunits to proton translocation. Functionally, component of the F(0) channel, it forms part of the peripheral stalk, linking F(1) to F(0). The chain is ATP synthase subunit b, chloroplastic from Eucalyptus globulus subsp. globulus (Tasmanian blue gum).